The chain runs to 477 residues: Aspartyl/glutamyl-tRNA(Asn/Gln) amidotransferase subunit B (477 aa).

Belongs to the GatB/GatE family. GatB subfamily. Heterotrimer of A, B and C subunits.

The catalysed reaction is L-glutamyl-tRNA(Gln) + L-glutamine + ATP + H2O = L-glutaminyl-tRNA(Gln) + L-glutamate + ADP + phosphate + H(+). It carries out the reaction L-aspartyl-tRNA(Asn) + L-glutamine + ATP + H2O = L-asparaginyl-tRNA(Asn) + L-glutamate + ADP + phosphate + 2 H(+). In terms of biological role, allows the formation of correctly charged Asn-tRNA(Asn) or Gln-tRNA(Gln) through the transamidation of misacylated Asp-tRNA(Asn) or Glu-tRNA(Gln) in organisms which lack either or both of asparaginyl-tRNA or glutaminyl-tRNA synthetases. The reaction takes place in the presence of glutamine and ATP through an activated phospho-Asp-tRNA(Asn) or phospho-Glu-tRNA(Gln). The protein is Aspartyl/glutamyl-tRNA(Asn/Gln) amidotransferase subunit B of Oenococcus oeni (strain ATCC BAA-331 / PSU-1).